The sequence spans 1227 residues: DNA-directed RNA polymerase subunit beta' (1227 aa).

Cysteine 60, cysteine 62, cysteine 75, and cysteine 78 together coordinate Zn(2+). The Mg(2+) site is built by aspartate 449, aspartate 451, and aspartate 453. Cysteine 847, cysteine 921, cysteine 928, and cysteine 931 together coordinate Zn(2+).

This sequence belongs to the RNA polymerase beta' chain family. In terms of assembly, the RNAP catalytic core consists of 2 alpha, 1 beta, 1 beta' and 1 omega subunit. When a sigma factor is associated with the core the holoenzyme is formed, which can initiate transcription. It depends on Mg(2+) as a cofactor. The cofactor is Zn(2+).

It carries out the reaction RNA(n) + a ribonucleoside 5'-triphosphate = RNA(n+1) + diphosphate. DNA-dependent RNA polymerase catalyzes the transcription of DNA into RNA using the four ribonucleoside triphosphates as substrates. The sequence is that of DNA-directed RNA polymerase subunit beta' from Lysinibacillus sphaericus (strain C3-41).